The primary structure comprises 1026 residues: Glutactin (1026 aa).

The N-terminal stretch at 1-17 (MKPLLLVLALCGAQVHA) is a signal peptide. 2 positions are modified to sulfotyrosine: tyrosine 26 and tyrosine 29. N-linked (GlcNAc...) asparagine glycosylation occurs at asparagine 115. A disulfide bridge links cysteine 123 with cysteine 145. At tyrosine 182 the chain carries Sulfotyrosine. Cysteine 298 and cysteine 316 are oxidised to a cystine. 2 N-linked (GlcNAc...) asparagine glycosylation sites follow: asparagine 368 and asparagine 402. Position 559 is a sulfotyrosine (tyrosine 559). The segment at 601-641 (PITTTTTTTTTTTTTSRPYAYNPYANWQNRPSQQHPNWHPA) is disordered. Residues 603-615 (TTTTTTTTTTTTT) show a composition bias toward low complexity. Residues 625-636 (ANWQNRPSQQHP) are compositionally biased toward polar residues. Tyrosine 645 is subject to Sulfotyrosine. 2 disordered regions span residues 659 to 695 (EREQ…REQE) and 723 to 1026 (EREQ…NSRN). The segment covering 723–752 (EREQYEREQQEREQREREELERQQREREQQ) has biased composition (basic and acidic residues). Residue tyrosine 727 is modified to Sulfotyrosine. Asparagine 810 carries N-linked (GlcNAc...) asparagine glycosylation. Residues 811 to 854 (FSEEDREQQQQEQLRREQQEQQEREYQLQLEREQQEREQQERGQ) show a composition bias toward basic and acidic residues. Tyrosine 836, tyrosine 862, tyrosine 865, tyrosine 868, tyrosine 922, and tyrosine 928 each carry sulfotyrosine. Low complexity predominate over residues 855 to 866 (QEPGPEEYPSYE). The segment covering 867-893 (EYSRALQEKNAERDRIYAEEQERERQQ) has biased composition (basic and acidic residues). Over residues 923–944 (DGDRSYAEEQEREQQRRDQVEQ) the composition is skewed to basic and acidic residues. The span at 945–969 (EREEQPDEDQGEEYERSPDEEEAAE) shows a compositional bias: acidic residues. Residues tyrosine 981, tyrosine 984, and tyrosine 1006 each carry the sulfotyrosine modification. Positions 1002–1026 (EEERYRAQQEEEDRIQAERERNSRN) are enriched in basic and acidic residues.

The protein in the N-terminal section; belongs to the type-B carboxylesterase/lipase family. Extensively O-glycosylated and also N-glycosylated. In terms of processing, about four tyrosines are sulfated.

Its subcellular location is the secreted. The protein localises to the extracellular space. The protein resides in the extracellular matrix. It localises to the basement membrane. Functionally, not known. Binds calcium ions. The protein is Glutactin (Glt) of Drosophila melanogaster (Fruit fly).